Here is a 79-residue protein sequence, read N- to C-terminus: UPF0154 protein llmg_1186 (79 aa).

The helical transmembrane segment at Ile-4–Phe-24 threads the bilayer.

Belongs to the UPF0154 family.

Its subcellular location is the cell membrane. This is UPF0154 protein llmg_1186 from Lactococcus lactis subsp. cremoris (strain MG1363).